Reading from the N-terminus, the 121-residue chain is Glycine cleavage system H protein (121 aa).

In terms of domain architecture, Lipoyl-binding spans 22–102 (IAWVGITKYA…DSSVWLFKAE (81 aa)). Lys63 bears the N6-lipoyllysine mark.

It belongs to the GcvH family. As to quaternary structure, the glycine cleavage system is composed of four proteins: P, T, L and H. It depends on (R)-lipoate as a cofactor.

Its function is as follows. The glycine cleavage system catalyzes the degradation of glycine. The H protein shuttles the methylamine group of glycine from the P protein to the T protein. This Tropheryma whipplei (strain TW08/27) (Whipple's bacillus) protein is Glycine cleavage system H protein.